A 417-amino-acid chain; its full sequence is Blood group Rh(CE) polypeptide (417 aa).

The next 11 membrane-spanning stretches (helical) occupy residues 12-32, 44-64, 77-97, 125-145, 172-192, 203-223, 238-258, 265-285, 287-307, 331-351, and 358-378; these read CLPLCALTLEAALILLFYFFT, LVASYQVGQDLTVMAALGLGF, VAFNLFMLALGVQWAILLDGF, ISAGAVLGKVNLAQLVVMVLV, FYVFAAYFGLTVAWCLPKPLP, TIPSLSAMLGALFLWMFWPSV, MFNTYYALAVSVVTAISGSSL, ISMTYVHSAVLAGGVAVGTSC, LIPSPWLAMVLGLVAGLISIG, IFSLLGLLGEITYIVLLVLHT, and MIGFQVLLSIGELSLAIVIAL.

It belongs to the ammonium transporter (TC 2.A.49) family. Rh subfamily. Heterotrimer; a RHCE monomer interacts with a RHAG homodimer. Component of the ankyrin-1 complex in the erythrocyte, composed of ANK1, RHCE, RHAG, SLC4A1, EPB42, GYPA, GYPB and AQP1. Interacts (via the N- and C-terminal) with ANK1 (via ANk 1-5 repeats); mediates the primary membrane attachment site for ANK1. Restricted to tissues or cell lines expressing erythroid characters. Isoform 4g and isoform RhPI-Alpha are expressed in immature erythroblasts but not in mature erythroblasts.

It localises to the membrane. Its function is as follows. Component of the ankyrin-1 complex, a multiprotein complex involved in the stability and shape of the erythrocyte membrane. Mediates the primary membrane attachment site for ANK1 when associated with RHAG. May participate in the ammonium and carbon dioxide transport through the heterotrimer form. This chain is Blood group Rh(CE) polypeptide, found in Homo sapiens (Human).